A 536-amino-acid chain; its full sequence is Quinate permease (536 aa).

The Cytoplasmic segment spans residues 1–26; that stretch reads MTLLALKEDRPTPKAVYNWRVYTCAA. Residues 27–47 form a helical membrane-spanning segment; sequence IASFASCMIGYDSSFIGTTLA. At 48 to 74 the chain is on the extracellular side; it reads LPSFTKEFDFASYTPGALALLQSNIVS. A helical membrane pass occupies residues 75-95; that stretch reads VYQAGAFFGSLFAFATSYFLG. At 96 to 98 the chain is on the cytoplasmic side; that stretch reads RRR. The helical transmembrane segment at 99–119 threads the bilayer; it reads SLIAFSVVFIIGAAIMLAADG. Residues 120–131 lie on the Extracellular side of the membrane; sequence QRRGVDPIIAGR. The helical transmembrane segment at 132–152 threads the bilayer; that stretch reads VLAGIGVGGASNMVPIYISEL. Topologically, residues 153–160 are cytoplasmic; that stretch reads APPAVRGR. The chain crosses the membrane as a helical span at residues 161 to 181; sequence LVGIYELGWQIGGLVGFWINY. The Extracellular portion of the chain corresponds to 182–195; that stretch reads GVNTTMAPTRSQWL. N-linked (GlcNAc...) asparagine glycosylation occurs at N184. The chain crosses the membrane as a helical span at residues 196-216; the sequence is IPFAVQLIPAGLLFLGSFWIP. Over 217–285 the chain is Cytoplasmic; the sequence is ESPRWLFANG…SLKQPKVRWR (69 aa). The helical transmembrane segment at 286–306 threads the bilayer; that stretch reads FFLGGMLFLWQNGSGINAINY. Residues 307 to 327 lie on the Extracellular side of the membrane; it reads YSPTVFRSIGITGTNTGFLTT. The chain crosses the membrane as a helical span at residues 328-349; the sequence is GIFGVVKMVLTIIWLLWLVDLV. Residues 350–352 lie on the Cytoplasmic side of the membrane; sequence GRR. The chain crosses the membrane as a helical span at residues 353-373; sequence RILFVGATGGSLCMWFIGAYI. The Extracellular segment spans residues 374–389; the sequence is KIAGPGTTKTEEAKLT. Residues 390 to 410 form a helical membrane-spanning segment; it reads SGGIAAIFFFYLWTAFYTPSW. Residues 411 to 435 are Cytoplasmic-facing; it reads NGTPWVINSEMFDQNTRSLGQASAA. The helical transmembrane segment at 436 to 456 threads the bilayer; it reads ANNWFWNFIISRFTPQMFIKM. The Extracellular portion of the chain corresponds to 457–458; sequence EY. Residues 459–479 form a helical membrane-spanning segment; the sequence is GVYFFFASLMLLSVVFIYFFI. Residues 480 to 536 lie on the Cytoplasmic side of the membrane; that stretch reads PETKSIPLEAMDRLFAIKSVHNANKILMDELNFDRNPEREQSSLDEKDRVTQTENAV. Basic and acidic residues predominate over residues 516-530; it reads PEREQSSLDEKDRVT. Positions 516–536 are disordered; that stretch reads PEREQSSLDEKDRVTQTENAV.

It belongs to the major facilitator superfamily. Sugar transporter (TC 2.A.1.1) family.

Its subcellular location is the membrane. This chain is Quinate permease (qa-y), found in Neurospora africana.